The chain runs to 99 residues: A-type ATP synthase subunit F (99 aa).

This sequence belongs to the V-ATPase F subunit family. Has multiple subunits with at least A(3), B(3), C, D, E, F, H, I and proteolipid K(x).

Its subcellular location is the cell membrane. In terms of biological role, component of the A-type ATP synthase that produces ATP from ADP in the presence of a proton gradient across the membrane. The sequence is that of A-type ATP synthase subunit F from Methanococcus maripaludis (strain DSM 14266 / JCM 13030 / NBRC 101832 / S2 / LL).